The chain runs to 258 residues: Mitochondrial distribution and morphology protein 12 (258 aa).

An SMP-LTD domain is found at Met1–Asn233. The interval Glu238–Asn258 is disordered. The segment covering Thr246–Asn258 has biased composition (low complexity).

Belongs to the MDM12 family. Component of the ER-mitochondria encounter structure (ERMES) or MDM complex, composed of MMM1, MDM10, MDM12 and MDM34. An MMM1 homodimer associates with one molecule of MDM12 on each side in a pairwise head-to-tail manner, and the SMP-LTD domains of MMM1 and MDM12 generate a continuous hydrophobic tunnel for phospholipid trafficking.

It is found in the mitochondrion outer membrane. Its subcellular location is the endoplasmic reticulum membrane. In terms of biological role, component of the ERMES/MDM complex, which serves as a molecular tether to connect the endoplasmic reticulum (ER) and mitochondria. Components of this complex are involved in the control of mitochondrial shape and protein biogenesis, and function in nonvesicular lipid trafficking between the ER and mitochondria. MDM12 is required for the interaction of the ER-resident membrane protein MMM1 and the outer mitochondrial membrane-resident beta-barrel protein MDM10. The MDM12-MMM1 subcomplex functions in the major beta-barrel assembly pathway that is responsible for biogenesis of all mitochondrial outer membrane beta-barrel proteins, and acts in a late step after the SAM complex. The MDM10-MDM12-MMM1 subcomplex further acts in the TOM40-specific pathway after the action of the MDM12-MMM1 complex. Essential for establishing and maintaining the structure of mitochondria and maintenance of mtDNA nucleoids. The polypeptide is Mitochondrial distribution and morphology protein 12 (Zygosaccharomyces rouxii (strain ATCC 2623 / CBS 732 / NBRC 1130 / NCYC 568 / NRRL Y-229)).